We begin with the raw amino-acid sequence, 105 residues long: Large ribosomal subunit protein eL30 (105 aa).

Glycyl lysine isopeptide (Lys-Gly) (interchain with G-Cter in ubiquitin) cross-links involve residues K22, K53, and K83.

This sequence belongs to the eukaryotic ribosomal protein eL30 family. In terms of assembly, component of the large ribosomal subunit (LSU). Mature yeast ribosomes consist of a small (40S) and a large (60S) subunit. The 40S small subunit contains 1 molecule of ribosomal RNA (18S rRNA) and 33 different proteins (encoded by 57 genes). The large 60S subunit contains 3 rRNA molecules (25S, 5.8S and 5S rRNA) and 46 different proteins (encoded by 81 genes).

It localises to the cytoplasm. In terms of biological role, component of the ribosome, a large ribonucleoprotein complex responsible for the synthesis of proteins in the cell. The small ribosomal subunit (SSU) binds messenger RNAs (mRNAs) and translates the encoded message by selecting cognate aminoacyl-transfer RNA (tRNA) molecules. The large subunit (LSU) contains the ribosomal catalytic site termed the peptidyl transferase center (PTC), which catalyzes the formation of peptide bonds, thereby polymerizing the amino acids delivered by tRNAs into a polypeptide chain. The nascent polypeptides leave the ribosome through a tunnel in the LSU and interact with protein factors that function in enzymatic processing, targeting, and the membrane insertion of nascent chains at the exit of the ribosomal tunnel. This is Large ribosomal subunit protein eL30 from Saccharomyces cerevisiae (strain ATCC 204508 / S288c) (Baker's yeast).